The chain runs to 618 residues: Alpha-dioxygenase PIOX (618 aa).

The Proton acceptor role is filled by His-157. Position 158 (Asp-158) interacts with Ca(2+). His-162 provides a ligand contact to heme b. Residues Thr-210, Trp-212, Asp-214, and Ser-216 each coordinate Ca(2+). Residue His-311 coordinates hexadecanoate. 3 residues coordinate heme b: His-382, Arg-479, and Arg-483. Glu-599 provides a ligand contact to hexadecanoate.

This sequence belongs to the peroxidase family. Heme b is required as a cofactor. Ca(2+) serves as cofactor.

It carries out the reaction a 1,2-saturated fatty acid + O2 = a (2R)-2-hydroperoxy fatty acid. The enzyme catalyses (9Z,12Z)-octadecadienoate + O2 = (2R,9Z,12Z)-2-hydroperoxyoctadecadienoate. The catalysed reaction is hexadecanoate + O2 = (2R)-2-hydroperoxyhexadecanoate. It catalyses the reaction (9Z,12Z,15Z)-octadecatrienoate + O2 = (R)-2-hydroperoxy-(9Z,12Z,15Z)-octadecatrienoate. It carries out the reaction tetradecanoate + O2 = (2R)-2-hydroperoxytetradecanoate. The enzyme catalyses octadecanoate + O2 = (2R)-2-hydroperoxyoctadecanoate. The catalysed reaction is (9Z)-octadecenoate + O2 = (2R,9Z)-2-hydroperoxyoctadecenoate. Functionally, alpha-dioxygenase that catalyzes the primary oxygenation step of a variety of 14-20 carbon fatty acids, containing up to three unsaturated bonds, into their corresponding 2R-hydroperoxides. Involved in the production of oxylipins that function in cell signaling, wound healing, and protection from infection. This is Alpha-dioxygenase PIOX from Oryza sativa subsp. japonica (Rice).